Here is a 484-residue protein sequence, read N- to C-terminus: Coronin-1B (484 aa).

At serine 2 the chain carries Phosphoserine. WD repeat units lie at residues 80 to 120 (GHTG…LTSP), 130 to 170 (GHTK…ELYR), 174 to 213 (LHPD…LVAE), 217 to 260 (AHEG…EPMA), and 265 to 305 (DSSN…PYIH). A disordered region spans residues 404–446 (LKVSRRNVLSDSRPASYSRSGASTATAVTDVPSGNLAGAGEAG). Residues 410 to 430 (NVLSDSRPASYSRSGASTATA) show a composition bias toward polar residues. A coiled-coil region spans residues 444–482 (EAGKLEEVMQELRALRMLVKEQGERISRLEEQLGRMENG).

The protein belongs to the WD repeat coronin family. In terms of assembly, forms homooligomers, but does not form complexes with the other coronins. Interacts with Arp2/3 complex components, including ACTR2, ARPC1B and ARPC2. Binds actin. Phosphorylation on Ser-2 regulates the interaction with the Arp2/3 complex and cell motility in fibroblasts. Phosphorylation does not seem to affect subcellular location. In terms of tissue distribution, ubiquitous.

The protein localises to the cytoplasm. Its subcellular location is the cytoskeleton. It is found in the stress fiber. Functionally, regulates leading edge dynamics and cell motility in fibroblasts. May be involved in cytokinesis and signal transduction. The sequence is that of Coronin-1B (Coro1b) from Mus musculus (Mouse).